The primary structure comprises 813 residues: Phosphoribosylformylglycinamidine synthase subunit PurL (813 aa).

H56 is an active-site residue. ATP is bound by residues Y59 and K103. Residue E105 participates in Mg(2+) binding. Substrate contacts are provided by residues 106-109 (SHNH) and R128. H107 acts as the Proton acceptor in catalysis. D129 is a binding site for Mg(2+). Q253 lines the substrate pocket. D281 is a binding site for Mg(2+). 325–327 (ESQ) contributes to the substrate binding site. Residues N511 and G548 each coordinate ATP. Residue N549 coordinates Mg(2+). Residue S551 participates in substrate binding.

This sequence belongs to the FGAMS family. Monomer. Part of the FGAM synthase complex composed of 1 PurL, 1 PurQ and 2 PurS subunits.

The protein resides in the cytoplasm. It carries out the reaction N(2)-formyl-N(1)-(5-phospho-beta-D-ribosyl)glycinamide + L-glutamine + ATP + H2O = 2-formamido-N(1)-(5-O-phospho-beta-D-ribosyl)acetamidine + L-glutamate + ADP + phosphate + H(+). Its pathway is purine metabolism; IMP biosynthesis via de novo pathway; 5-amino-1-(5-phospho-D-ribosyl)imidazole from N(2)-formyl-N(1)-(5-phospho-D-ribosyl)glycinamide: step 1/2. In terms of biological role, part of the phosphoribosylformylglycinamidine synthase complex involved in the purines biosynthetic pathway. Catalyzes the ATP-dependent conversion of formylglycinamide ribonucleotide (FGAR) and glutamine to yield formylglycinamidine ribonucleotide (FGAM) and glutamate. The FGAM synthase complex is composed of three subunits. PurQ produces an ammonia molecule by converting glutamine to glutamate. PurL transfers the ammonia molecule to FGAR to form FGAM in an ATP-dependent manner. PurS interacts with PurQ and PurL and is thought to assist in the transfer of the ammonia molecule from PurQ to PurL. This is Phosphoribosylformylglycinamidine synthase subunit PurL from Corynebacterium jeikeium (strain K411).